The following is a 344-amino-acid chain: Melanocyte-stimulating hormone receptor (344 aa).

Residues 1 to 37 (MPMQGAQRKLLGSLNSTPTATSNPGLAANHTGAPCLE) are Extracellular-facing. Residue Asn29 is glycosylated (N-linked (GlcNAc...) asparagine). Residues 38–63 (VSIPDGLFLSLGLVSLVENVLVVAAI) form a helical membrane-spanning segment. Residues 64-72 (AKNRNLHSS) lie on the Cytoplasmic side of the membrane. Residues 73–93 (MYXFICCLALSDLLVSGSNML) traverse the membrane as a helical segment. The Extracellular portion of the chain corresponds to 94-118 (ETAIILLLEAGTLATRASVVQQLHN). The chain crosses the membrane as a helical span at residues 119–140 (TIDVLTCSSMLCSLCFLGAIAV). The Cytoplasmic segment spans residues 141–163 (DRYISIFYALRYHSIMTLPRAQR). A helical transmembrane segment spans residues 164-183 (AIAAIWVASVLSSTLFITYY). Residues 184–191 (DHAAVLLC) are Extracellular-facing. Residues 192-211 (LVVFFLAMLVLMAVLYVHML) traverse the membrane as a helical segment. The Cytoplasmic portion of the chain corresponds to 212 to 240 (ARACQHAQGIIRLHNRQLPAHKGFGLRGA). Residues 241–266 (ATLTILLGIFFLCWGPFFLHLTLVVF) form a helical membrane-spanning segment. The Extracellular segment spans residues 267–279 (CPQHLTCNCIFKN). Residues 280–300 (FKVFLTLIICNTIIDPLIYAF) form a helical membrane-spanning segment. Residues 301–344 (RSQELRRTLKEVLLCSSWPGCWAEGGGDSVWPGSCVTLRGPLPP) are Cytoplasmic-facing. The S-palmitoyl cysteine moiety is linked to residue Cys315.

This sequence belongs to the G-protein coupled receptor 1 family. In terms of assembly, interacts with MGRN1, but does not undergo MGRN1-mediated ubiquitination; this interaction competes with GNAS-binding and thus inhibits agonist-induced cAMP production. Interacts with OPN3; the interaction results in a decrease in MC1R-mediated cAMP signaling and ultimately a decrease in melanin production in melanocytes.

The protein resides in the cell membrane. Receptor for MSH (alpha, beta and gamma) and ACTH. The activity of this receptor is mediated by G proteins which activate adenylate cyclase. Mediates melanogenesis, the production of eumelanin (black/brown) and phaeomelanin (red/yellow), via regulation of cAMP signaling in melanocytes. This chain is Melanocyte-stimulating hormone receptor (MC1R), found in Callithrix geoffroyi (Geoffroy's marmoset).